The chain runs to 432 residues: 3-phosphoshikimate 1-carboxyvinyltransferase (432 aa).

3-phosphoshikimate-binding residues include K23, S24, and R28. K23 contacts phosphoenolpyruvate. G95 and R123 together coordinate phosphoenolpyruvate. Positions 167, 169, 317, and 344 each coordinate 3-phosphoshikimate. Position 169 (Q169) interacts with phosphoenolpyruvate. D317 acts as the Proton acceptor in catalysis. Phosphoenolpyruvate is bound by residues R348 and R390.

It belongs to the EPSP synthase family. In terms of assembly, monomer.

It localises to the cytoplasm. The enzyme catalyses 3-phosphoshikimate + phosphoenolpyruvate = 5-O-(1-carboxyvinyl)-3-phosphoshikimate + phosphate. It functions in the pathway metabolic intermediate biosynthesis; chorismate biosynthesis; chorismate from D-erythrose 4-phosphate and phosphoenolpyruvate: step 6/7. Catalyzes the transfer of the enolpyruvyl moiety of phosphoenolpyruvate (PEP) to the 5-hydroxyl of shikimate-3-phosphate (S3P) to produce enolpyruvyl shikimate-3-phosphate and inorganic phosphate. The polypeptide is 3-phosphoshikimate 1-carboxyvinyltransferase (Staphylococcus aureus (strain N315)).